The chain runs to 751 residues: Oxysterol-binding protein-related protein 11 (751 aa).

Met-1 is modified (N-acetylmethionine). Residues 1-57 (MQGGEPASVMKVSESEGKLEGLATAVTPNKNSGNSSCGGAISSSSSNSSRGGSAKGW) form a disordered region. Residue Ser-15 is modified to Phosphoserine. Thr-27 is subject to Phosphothreonine. A compositionally biased stretch (low complexity) spans 31-52 (NSGNSSCGGAISSSSSNSSRGG). The 98-residue stretch at 63-160 (MESVNGYLMK…WVSRLQICTQ (98 aa)) folds into the PH domain. A phosphoserine mark is found at Ser-177, Ser-179, Ser-182, Ser-186, Ser-189, and Ser-194. Disordered stretches follow at residues 475-497 (SGVS…EEAP) and 694-716 (EIDK…ERLR).

This sequence belongs to the OSBP family. In terms of assembly, heterodimer with OSBPL9.

Its subcellular location is the late endosome membrane. It localises to the golgi apparatus. The protein localises to the trans-Golgi network membrane. The catalysed reaction is a 1,2-diacyl-sn-glycero-3-phospho-(1D-myo-inositol 4-phosphate)(out) + a 1,2-diacyl-sn-glycero-3-phospho-L-serine(in) = a 1,2-diacyl-sn-glycero-3-phospho-(1D-myo-inositol 4-phosphate)(in) + a 1,2-diacyl-sn-glycero-3-phospho-L-serine(out). Plays a role in regulating ADIPOQ and FABP4 levels in differentiating adipocytes and is also involved in regulation of adipocyte triglyceride storage. Weakly binds 25-hydroxycholesterol. Interacts with OSBPL9 to function as lipid transfer proteins. Together they form a heterodimer that localizes at the ER-trans-Golgi membrane contact sites, and exchanges phosphatidylserine (1,2-diacyl-sn-glycero-3-phospho-L-serine, PS) for phosphatidylinositol-4-phosphate (1,2-diacyl-sn-glycero-3-phospho-(1D-myo-inositol 4-phosphate), PI(4)P) between the two organelles, a step that is critical for sphingomyelin synthesis in the Golgi complex. The protein is Oxysterol-binding protein-related protein 11 (Osbpl11) of Mus musculus (Mouse).